Consider the following 239-residue polypeptide: Ribonuclease PH (239 aa).

Residues arginine 87 and 125–127 (GTR) each bind phosphate.

This sequence belongs to the RNase PH family. In terms of assembly, homohexameric ring arranged as a trimer of dimers.

It catalyses the reaction tRNA(n+1) + phosphate = tRNA(n) + a ribonucleoside 5'-diphosphate. Functionally, phosphorolytic 3'-5' exoribonuclease that plays an important role in tRNA 3'-end maturation. Removes nucleotide residues following the 3'-CCA terminus of tRNAs; can also add nucleotides to the ends of RNA molecules by using nucleoside diphosphates as substrates, but this may not be physiologically important. Probably plays a role in initiation of 16S rRNA degradation (leading to ribosome degradation) during starvation. In Pseudomonas paraeruginosa (strain DSM 24068 / PA7) (Pseudomonas aeruginosa (strain PA7)), this protein is Ribonuclease PH.